The following is a 76-amino-acid chain: Omega-conotoxin MoVIA (76 aa).

An N-terminal signal peptide occupies residues 1–22; the sequence is MKLTCVVIVAVLFLTACQLITA. The propeptide occupies 23–45; sequence DDSRSTQRHRALRSTTKLSMSTR. 3 disulfides stabilise this stretch: cysteine 46-cysteine 61, cysteine 53-cysteine 64, and cysteine 60-cysteine 71. A hydroxyproline mark is found at proline 49 and proline 55.

The protein belongs to the conotoxin O1 superfamily. As to expression, expressed by the venom duct.

It localises to the secreted. Its function is as follows. Omega-conotoxins act at presynaptic membranes, they bind and block voltage-gated calcium channels (Cav). This toxin potently blocks mammalian N-type calcium channels (Cav2.2/CACNA1B) (IC(50)=330 nM on human channels). It is 9-fold more potent in displacing radiolabeled omega-conotoxin GVIA from fish brain membranes than from human SH-SY5Y cells. Omega-conotoxins act at presynaptic membranes, they bind and block voltage-gated calcium channels (Cav). This toxin potently blocks mammalian N-type calcium channels (Cav2.2/CACNA1B) (IC(50)=600 nM on human channels). It is 60-fold more potent in displacing radiolabeled omega-conotoxin GVIA from fish brain membranes than from human SH-SY5Y cells. In vivo, when tested on rat neuropathic pain model, this toxin shows an analgesic activity. The protein is Omega-conotoxin MoVIA of Conus moncuri (Sea snail).